A 140-amino-acid polypeptide reads, in one-letter code: Ribonuclease P protein subunit p20 (140 aa).

Belongs to the histone-like Alba family. Component of nuclear RNase P and RNase MRP complexes. RNase P consists of a catalytic RNA moiety and 10 different protein chains; POP1, POP4, POP5, POP7, RPP14, RPP21, RPP25, RPP30, RPP38 and RPP40. Within the RNase P complex, POP1, POP7 and RPP25 form the 'finger' subcomplex, POP5, RPP14, RPP40 and homodimeric RPP30 form the 'palm' subcomplex, and RPP21, POP4 and RPP38 form the 'wrist' subcomplex. All subunits of the RNase P complex interact with the catalytic RNA. Several subunits of RNase P are also part of the RNase MRP complex. RNase MRP consists of a catalytic RNA moiety and about 8 protein subunits; POP1, POP7, RPP25, RPP30, RPP38, RPP40 and possibly also POP4 and POP5. Interacts with SMN1. POP7 forms a heterodimer with RPP25 that binds to the P3 stem loop of the catalytic RNA.

The protein resides in the nucleus. It is found in the nucleolus. Its subcellular location is the cytoplasm. It localises to the cytoplasmic granule. Functionally, component of ribonuclease P, a ribonucleoprotein complex that generates mature tRNA molecules by cleaving their 5'-ends. Also a component of the MRP ribonuclease complex, which cleaves pre-rRNA sequences. In Mus musculus (Mouse), this protein is Ribonuclease P protein subunit p20 (Pop7).